Reading from the N-terminus, the 467-residue chain is NADH-quinone oxidoreductase subunit H (467 aa).

9 helical membrane-spanning segments follow: residues 18-38 (WWLV…TVLF), 88-108 (AVYV…IAVI), 131-151 (LPIA…GIVL), 172-192 (MISY…YSGS), 206-226 (WYIV…VGET), 256-276 (FMLA…TLFL), 296-316 (WWPL…FIWL), 328-348 (LMKL…MLVA), and 363-383 (IALY…LVDM). The disordered stretch occupies residues 389–467 (GKAADQPAET…PTDGKEASDG (79 aa)). The span at 418–430 (PVPPMPGQQVPPV) shows a compositional bias: pro residues.

Belongs to the complex I subunit 1 family. As to quaternary structure, NDH-1 is composed of 14 different subunits. Subunits NuoA, H, J, K, L, M, N constitute the membrane sector of the complex.

The protein localises to the cell membrane. The enzyme catalyses a quinone + NADH + 5 H(+)(in) = a quinol + NAD(+) + 4 H(+)(out). NDH-1 shuttles electrons from NADH, via FMN and iron-sulfur (Fe-S) centers, to quinones in the respiratory chain. The immediate electron acceptor for the enzyme in this species is believed to be ubiquinone. Couples the redox reaction to proton translocation (for every two electrons transferred, four hydrogen ions are translocated across the cytoplasmic membrane), and thus conserves the redox energy in a proton gradient. This subunit may bind ubiquinone. This is NADH-quinone oxidoreductase subunit H from Streptomyces coelicolor (strain ATCC BAA-471 / A3(2) / M145).